Reading from the N-terminus, the 192-residue chain is Glycerol-3-phosphate acyltransferase (192 aa).

Helical transmembrane passes span 1–21 (MTSA…GVLL), 51–71 (LGAV…VLAV), 78–98 (PTVH…PVWL), 112–132 (VLLV…VAVF), and 155–175 (LTAR…LMLW).

Belongs to the PlsY family. In terms of assembly, probably interacts with PlsX.

The protein localises to the cell inner membrane. It catalyses the reaction an acyl phosphate + sn-glycerol 3-phosphate = a 1-acyl-sn-glycero-3-phosphate + phosphate. The protein operates within lipid metabolism; phospholipid metabolism. Its function is as follows. Catalyzes the transfer of an acyl group from acyl-phosphate (acyl-PO(4)) to glycerol-3-phosphate (G3P) to form lysophosphatidic acid (LPA). This enzyme utilizes acyl-phosphate as fatty acyl donor, but not acyl-CoA or acyl-ACP. The chain is Glycerol-3-phosphate acyltransferase from Myxococcus xanthus (strain DK1622).